The primary structure comprises 91 residues: CRISPR-associated endoribonuclease Cas2 2 (91 aa).

D8 serves as a coordination point for Mg(2+).

Belongs to the CRISPR-associated endoribonuclease Cas2 protein family. Homodimer, forms a heterotetramer with a Cas1 homodimer. Mg(2+) serves as cofactor.

In terms of biological role, CRISPR (clustered regularly interspaced short palindromic repeat), is an adaptive immune system that provides protection against mobile genetic elements (viruses, transposable elements and conjugative plasmids). CRISPR clusters contain sequences complementary to antecedent mobile elements and target invading nucleic acids. CRISPR clusters are transcribed and processed into CRISPR RNA (crRNA). Functions as a ssRNA-specific endoribonuclease. Involved in the integration of spacer DNA into the CRISPR cassette. This is CRISPR-associated endoribonuclease Cas2 2 from Pyrobaculum aerophilum (strain ATCC 51768 / DSM 7523 / JCM 9630 / CIP 104966 / NBRC 100827 / IM2).